The following is a 123-amino-acid chain: Large ribosomal subunit protein uL18 (123 aa).

It belongs to the universal ribosomal protein uL18 family. Part of the 50S ribosomal subunit; part of the 5S rRNA/L5/L18/L25 subcomplex. Contacts the 5S and 23S rRNAs.

This is one of the proteins that bind and probably mediate the attachment of the 5S RNA into the large ribosomal subunit, where it forms part of the central protuberance. The sequence is that of Large ribosomal subunit protein uL18 from Bifidobacterium animalis subsp. lactis (strain AD011).